The chain runs to 251 residues: 2-C-methyl-D-erythritol 4-phosphate cytidylyltransferase (251 aa).

This sequence belongs to the IspD/TarI cytidylyltransferase family. IspD subfamily.

It carries out the reaction 2-C-methyl-D-erythritol 4-phosphate + CTP + H(+) = 4-CDP-2-C-methyl-D-erythritol + diphosphate. Its pathway is isoprenoid biosynthesis; isopentenyl diphosphate biosynthesis via DXP pathway; isopentenyl diphosphate from 1-deoxy-D-xylulose 5-phosphate: step 2/6. In terms of biological role, catalyzes the formation of 4-diphosphocytidyl-2-C-methyl-D-erythritol from CTP and 2-C-methyl-D-erythritol 4-phosphate (MEP). The sequence is that of 2-C-methyl-D-erythritol 4-phosphate cytidylyltransferase from Cupriavidus pinatubonensis (strain JMP 134 / LMG 1197) (Cupriavidus necator (strain JMP 134)).